The chain runs to 285 residues: ATP synthase gamma chain (285 aa).

This sequence belongs to the ATPase gamma chain family. As to quaternary structure, F-type ATPases have 2 components, CF(1) - the catalytic core - and CF(0) - the membrane proton channel. CF(1) has five subunits: alpha(3), beta(3), gamma(1), delta(1), epsilon(1). CF(0) has three main subunits: a, b and c.

Its subcellular location is the cell membrane. Its function is as follows. Produces ATP from ADP in the presence of a proton gradient across the membrane. The gamma chain is believed to be important in regulating ATPase activity and the flow of protons through the CF(0) complex. This is ATP synthase gamma chain from Halalkalibacterium halodurans (strain ATCC BAA-125 / DSM 18197 / FERM 7344 / JCM 9153 / C-125) (Bacillus halodurans).